Consider the following 92-residue polypeptide: MPRSLKKGPFVDEKLENKIVIARNTKSSHIIKTWSRRSTVTPEMVGLTFAVHNGKKFIPVFVTENMVGHKLGEFSPTRTFYGHAGSKKSKVR.

This sequence belongs to the universal ribosomal protein uS19 family.

In terms of biological role, protein S19 forms a complex with S13 that binds strongly to the 16S ribosomal RNA. This chain is Small ribosomal subunit protein uS19, found in Desulfosudis oleivorans (strain DSM 6200 / JCM 39069 / Hxd3) (Desulfococcus oleovorans).